The following is a 305-amino-acid chain: Sulfate adenylyltransferase subunit 2 (305 aa).

This sequence belongs to the PAPS reductase family. CysD subfamily. In terms of assembly, heterodimer composed of CysD, the smaller subunit, and CysN.

The catalysed reaction is sulfate + ATP + H(+) = adenosine 5'-phosphosulfate + diphosphate. The protein operates within sulfur metabolism; hydrogen sulfide biosynthesis; sulfite from sulfate: step 1/3. Its function is as follows. With CysN forms the ATP sulfurylase (ATPS) that catalyzes the adenylation of sulfate producing adenosine 5'-phosphosulfate (APS) and diphosphate, the first enzymatic step in sulfur assimilation pathway. APS synthesis involves the formation of a high-energy phosphoric-sulfuric acid anhydride bond driven by GTP hydrolysis by CysN coupled to ATP hydrolysis by CysD. The chain is Sulfate adenylyltransferase subunit 2 from Pseudomonas fluorescens (strain SBW25).